Consider the following 764-residue polypeptide: DNA-binding protein SATB1 (764 aa).

Over residues 1–15 the composition is skewed to basic and acidic residues; the sequence is MDHLNEATQGKEHSE. Residues 1–56 are disordered; the sequence is MDHLNEATQGKEHSEMSNNVSDPKGPPAKIARLEQNGSPLGRGRLGSTGGKMQGVP. A Nuclear localization signal motif is present at residues 20 to 40; it reads VSDPKGPPAKIARLEQNGSPL. Positions 43–52 are enriched in gly residues; the sequence is GRLGSTGGKM. Lys51 participates in a covalent cross-link: Glycyl lysine isopeptide (Lys-Gly) (interchain with G-Cter in SUMO2). The CMP domain maps to 71–172; sequence GTMLPVFCVV…VVTLKIQLHS (102 aa). Lys136 carries the N6-acetyllysine modification. The Protein interaction signature appears at 139–143; sequence PVPLS. The region spanning 175–248 is the CUTL domain; it reads KLEDLPPEQW…WYKHFKKTKD (74 aa). Ser185 is subject to Phosphoserine. A nuclear matrix targeting sequence (NMTS) region spans residues 224 to 278; it reads YYANVSAAKCQEFGRWYKHFKKTKDMMVEMDSLSELSQQGANHVNFGQQPVPGNT. The Nuclear matrix targeting sequence (NMTS) signature appears at 224–278; sequence YYANVSAAKCQEFGRWYKHFKKTKDMMVEMDSLSELSQQGANHVNFGQQPVPGNT. A compositionally biased stretch (polar residues) spans 266–296; the sequence is HVNFGQQPVPGNTAEQPPSPAQLSHGSQPSV. Residues 266–307 are disordered; that stretch reads HVNFGQQPVPGNTAEQPPSPAQLSHGSQPSVRTPLPNLHPGL. A DNA-binding region (CUT 1) is located at residues 361 to 448; sequence LEQQVSTNTE…ERDRIYQDER (88 aa). DNA-binding positions include Gln390, 400–410, and Asn425; that span reads RTQGLLSEILR. Positions 450–474 are disordered; the sequence is RSLNAASAMGPAPLLSTPPSRPPQV. A DNA-binding region (CUT 2) is located at residues 484-571; sequence NGKPENNTMN…ERDAIYEQES (88 aa). Residues 591–650 form a disordered region; it reads QIQQQQQQQQQQQQQQQPPPPPPQPQPQPQAGPRLPPRQPTVASSAESDEENRQKTRPRT. Over residues 593 to 606 the composition is skewed to low complexity; it reads QQQQQQQQQQQQQQ. Pro residues predominate over residues 607-629; the sequence is QPPPPPPQPQPQPQAGPRLPPRQ. The residue at position 638 (Ser638) is a Phosphoserine. Residues 646-705 constitute a DNA-binding region (homeobox); the sequence is TRPRTKISVEALGILQSFIQDVGLYPDEEAIQTLSAQLDLPKYTIIKFFQNQRYYLKHHG. Lys745 participates in a covalent cross-link: Glycyl lysine isopeptide (Lys-Gly) (interchain with G-Cter in SUMO).

The protein belongs to the CUT homeobox family. As to quaternary structure, interacts with PCAF. Interacts with sumoylated PML and HDAC1 Tat via the CMP domain. Also interacts with DYNLT3 and POLR2J2. Binds to EP300. Homodimer. Part of the nuclear protein complex gamma-globin promoter and enhancer binding factor (gamma-PE) composed at least of SATB1 and HOXB2. Interaction with CtBP1 when not acetylated stabilizes attachment to DNA and promotes transcription repression. Interacts with CUX1 (via DNA-binding domains); the interaction inhibits the attachment of both proteins to DNA. In terms of processing, sumoylated. Sumoylation promotes cleavage by caspases. Phosphorylated by PKC. Acetylated by PCAF. Phosphorylated form interacts with HDAC1, but unphosphorylated form interacts with PCAF. DNA binding properties are activated by phosphorylation and inactivated by acetylation. In opposition, gene expression is down-regulated by phosphorylation but up-regulated by acetylation. Post-translationally, cleaved at Asp-254 by caspase-3 and caspase-6 during T-cell apoptosis in thymus and during B-cell stimulation. The cleaved forms cannot dimerize and lose transcription regulation function because of impaired DNA and chromatin association. Expressed in the subventricular zone, rostral migratory stream and in the olfactory bulb (at protein level). Mainly expressed in thymus, spleen, and lymph nodes with a lower level observed in the brain.

The protein resides in the nucleus. It is found in the PML body. Functionally, required for the switching of fetal globin species, and beta- and gamma-globin genes regulation during erythroid differentiation. Plays a role in chromatin organization and nuclear architecture during apoptosis. Crucial silencing factor contributing to the initiation of X inactivation mediated by Xist RNA that occurs during embryogenesis and in lymphoma. Binds to DNA at special AT-rich sequences, the consensus SATB1-binding sequence (CSBS), at nuclear matrix- or scaffold-associated regions. Thought to recognize the sugar-phosphate structure of double-stranded DNA. Transcriptional repressor controlling nuclear and viral gene expression in a phosphorylated and acetylated status-dependent manner, by binding to matrix attachment regions (MARs) of DNA and inducing a local chromatin-loop remodeling. Acts as a docking site for several chromatin remodeling enzymes and also by recruiting corepressors (HDACs) or coactivators (HATs) directly to promoters and enhancers. Modulates genes that are essential in the maturation of the immune T-cell CD8SP from thymocytes. Promotes neuronal differentiation of neural stem/progenitor cells in the adult subventricular zone, possibly by positively regulating the expression of NEUROD1. This is DNA-binding protein SATB1 (Satb1) from Mus musculus (Mouse).